The chain runs to 264 residues: Octanoyltransferase (264 aa).

A BPL/LPL catalytic domain is found at 74 to 262 (GTASELVWLV…AFESVFGPRQ (189 aa)). Substrate is bound by residues 113–120 (RGGEYTYH), 193–195 (AIG), and 206–208 (GIA). Cys224 serves as the catalytic Acyl-thioester intermediate.

Belongs to the LipB family.

Its subcellular location is the cytoplasm. The enzyme catalyses octanoyl-[ACP] + L-lysyl-[protein] = N(6)-octanoyl-L-lysyl-[protein] + holo-[ACP] + H(+). Its pathway is protein modification; protein lipoylation via endogenous pathway; protein N(6)-(lipoyl)lysine from octanoyl-[acyl-carrier-protein]: step 1/2. Catalyzes the transfer of endogenously produced octanoic acid from octanoyl-acyl-carrier-protein onto the lipoyl domains of lipoate-dependent enzymes. Lipoyl-ACP can also act as a substrate although octanoyl-ACP is likely to be the physiological substrate. The polypeptide is Octanoyltransferase (Brucella melitensis biotype 1 (strain ATCC 23456 / CCUG 17765 / NCTC 10094 / 16M)).